The primary structure comprises 596 residues: Transcription factor EGL1 (596 aa).

Positions Glu-401 to Leu-450 constitute a bHLH domain.

As to quaternary structure, efficient DNA binding requires dimerization with another bHLH protein. Homodimer and heterodimer with GL3. Interacts with CPC, MYB0/GL1, MYB5, MYB23, MYB113, MYB114, MYB75/PAP1, MYB90/PAP2, TT2, TRY, TTG1 and MYB66/WER. As to expression, ubiquitous with higher levels in buds and flowers. Specifically localized in developing root hair cells. Expressed in epidermal root hair cells (trichoblasts) and moves to root hairless cells (atrichoblasts) by a cell-to-cell movement through plasmodesmata (at protein level).

The protein localises to the nucleus. Its function is as follows. Transcription activator, when associated with MYB75/PAP1, MYB90/PAP2 or TT2. Involved in epidermal cell fate specification. Negatively regulates stomata formation but promotes trichome formation. Together with MYB66/WER, promotes the formation of non-hair cells in root epidermis cells in the N position. Whereas together with CPC, promotes the formation of hair cells in root epidermis cells in the H position by inhibiting non-hair cell formation. Also seems to play a role in the activation of anthocyanin biosynthesis, probably together with MYB75/PAP1. Involved in seed mucilage production. Activates the transcription of GL2. In Arabidopsis thaliana (Mouse-ear cress), this protein is Transcription factor EGL1 (BHLH2).